Consider the following 506-residue polypeptide: Cobyric acid synthase (506 aa).

Residues 260 to 453 enclose the GATase cobBQ-type domain; it reads KVGVAAIYFP…FHGIFNEPAV (194 aa). The active-site Nucleophile is the Cys341. His445 is a catalytic residue.

This sequence belongs to the CobB/CobQ family. CobQ subfamily.

It functions in the pathway cofactor biosynthesis; adenosylcobalamin biosynthesis. In terms of biological role, catalyzes amidations at positions B, D, E, and G on adenosylcobyrinic A,C-diamide. NH(2) groups are provided by glutamine, and one molecule of ATP is hydrogenolyzed for each amidation. This Chlorobium chlorochromatii (strain CaD3) protein is Cobyric acid synthase.